The primary structure comprises 213 residues: Cell division protein SepF 2 (213 aa).

The tract at residues 16–89 (EDDGYDGRGF…ASLAAESSRP (74 aa)) is disordered. Acidic residues predominate over residues 27–39 (PDDDFEPELDPEP).

This sequence belongs to the SepF family. As to quaternary structure, homodimer. Interacts with FtsZ.

It localises to the cytoplasm. Cell division protein that is part of the divisome complex and is recruited early to the Z-ring. Probably stimulates Z-ring formation, perhaps through the cross-linking of FtsZ protofilaments. Its function overlaps with FtsA. This chain is Cell division protein SepF 2, found in Streptomyces coelicolor (strain ATCC BAA-471 / A3(2) / M145).